We begin with the raw amino-acid sequence, 2388 residues long: Hybrid signal transduction histidine kinase M (2388 aa).

8 disordered regions span residues 1–32 (MSNYLNANSTENNNNNNNNNNNNNNNINNNFN), 42–61 (FNTPPIGSNNNNNNNNNSIS), 69–111 (NECN…STPI), 123–209 (NRSN…NAYP), 237–337 (TLLN…SPKL), 361–421 (SPHG…YNDN), 430–449 (TRNTGYSSTGSIGNSSSSSF), and 486–542 (IYTP…NNNE). A compositionally biased stretch (polar residues) spans 69–82 (NECNSGGEQSPKIK). Composition is skewed to low complexity over residues 83-110 (TNNNSYNTPVSSSTSTTGTNTTPMKSTP), 125-206 (SNLN…SNSN), and 242-288 (SSNN…NNGG). Residues 293 to 306 (QFISSDNKYNTVGN) are compositionally biased toward polar residues. Residues 309 to 322 (HHHHHHQLHNHRHS) show a composition bias toward basic residues. Low complexity-rich tracts occupy residues 325–337 (QGSSSPIKSSPKL), 361–399 (SPHGSPFSSSSSSRKSSSSPSFLNQNNQNNPNNQNNQNN), 410–419 (NNSNDSFDYN), and 432–449 (NTGYSSTGSIGNSSSSSF). Pro residues predominate over residues 489–505 (PPYPQPYPQPPQLPPPS). Residues 506 to 541 (SSSSLSKENDNVDNNNTNNNNNNNNNNNNNNNNNNN) are compositionally biased toward low complexity. 4 consecutive transmembrane segments (helical) span residues 550 to 570 (TMNLIHISLLSVLAFYIFLMV), 589 to 609 (FILIFSFHFIFSSILMFLLVV), 645 to 665 (YIFLGLVLSGLVNILQVNLFF), and 679 to 699 (NISTAIEFLVVGIVLNFSHIP). The tract at residues 732-888 (NNDNKNKIND…NNNEEDDEEE (157 aa)) is disordered. A compositionally biased stretch (basic and acidic residues) spans 735–744 (NKNKINDKSD). Over residues 745–880 (NSNSITNNNN…NNNNNNNNNN (136 aa)) the composition is skewed to low complexity. 3 helical membrane-spanning segments follow: residues 896–916 (FQIFFTRIFLCLSITYTLIVL), 953–973 (VQFQAPLATLLHFIQLVLLLV), and 1025–1045 (CSVGFPIVGIILDIYSGWMSI). The 407-residue stretch at 1093-1499 (RLVQNTGSII…VFELQVPMKC (407 aa)) folds into the Histidine kinase domain. Residues 1236-1257 (PIHHHRHHHRHHHHHHHHHHHH) are compositionally biased toward basic residues. Positions 1236-1410 (PIHHHRHHHR…INNNINNNNN (175 aa)) are disordered. Acidic residues predominate over residues 1260–1274 (DDDDYDDDNDDDNNT). Basic and acidic residues predominate over residues 1286 to 1315 (LSDKIKDNQDENLELKKSNNDKIIENKENQ). Residues 1316–1410 (ENNNNNNNNN…INNNINNNNN (95 aa)) show a composition bias toward low complexity. Residues 1541-1656 (KILVIDDNPN…QLTVLSQLLP (116 aa)) form the Response regulatory 1 domain. Position 1592 is a 4-aspartylphosphate (Asp-1592). Disordered regions lie at residues 1666–1702 (SNQNLNNSGSSNGGGGGGGGGGGGGGGGGSGSSNIDF), 1960–2022 (GNNS…NSSN), 2036–2121 (CKGD…DIIN), 2133–2183 (QQQL…VKSS), and 2218–2256 (NQLNNNINNLNLNSNNNNNNNNNNNNNNNTNNDNNNNND). A compositionally biased stretch (gly residues) spans 1676 to 1696 (SNGGGGGGGGGGGGGGGGGSG). Residues 1974 to 1985 (TNNNTTTTTTTT) are compositionally biased toward low complexity. Over residues 1986–2010 (QPKKSPILTSSNGSDKSEGSTGSNR) the composition is skewed to polar residues. A compositionally biased stretch (low complexity) spans 2054 to 2064 (DSSSSSSSSDS). Over residues 2065–2076 (HGQDDHSYRLED) the composition is skewed to basic and acidic residues. Low complexity-rich tracts occupy residues 2078–2109 (SISSPSSQSPLLDLSGTSGTSGTTNLANSGIN) and 2133–2165 (QQQLQQQQQPQQQQPPGTPTISPSSSFPLLPIP). Polar residues predominate over residues 2169 to 2183 (INSSGASSGIKVKSS). The 122-residue stretch at 2262 to 2383 (NILLVEDNLV…LLISLLKKLV (122 aa)) folds into the Response regulatory 2 domain. Asp-2313 is subject to 4-aspartylphosphate.

Activation probably requires transfer of a phosphate group between a histidine in the kinase core (transmitter) domain and an aspartate of the receiver domain.

It localises to the membrane. The catalysed reaction is ATP + protein L-histidine = ADP + protein N-phospho-L-histidine.. In terms of biological role, acts as a receptor histidine kinase for a signal transduction pathway. This protein undergoes an ATP-dependent autophosphorylation at a conserved histidine residue in the kinase core, and a phosphoryl group is then transferred to a conserved aspartate residue in the receiver domain. The chain is Hybrid signal transduction histidine kinase M (dhkM) from Dictyostelium discoideum (Social amoeba).